The primary structure comprises 382 residues: 8-amino-7-oxononanoate synthase (382 aa).

Arg-26 serves as a coordination point for substrate. Residue 104–105 (GY) coordinates pyridoxal 5'-phosphate. His-129 lines the substrate pocket. Pyridoxal 5'-phosphate contacts are provided by residues Ser-175, 200–203 (DEAH), and 232–235 (TLSK). Lys-235 carries the N6-(pyridoxal phosphate)lysine modification. Thr-345 contacts substrate.

Belongs to the class-II pyridoxal-phosphate-dependent aminotransferase family. BioF subfamily. Homodimer. Pyridoxal 5'-phosphate is required as a cofactor.

It catalyses the reaction 6-carboxyhexanoyl-[ACP] + L-alanine + H(+) = (8S)-8-amino-7-oxononanoate + holo-[ACP] + CO2. It functions in the pathway cofactor biosynthesis; biotin biosynthesis. Functionally, catalyzes the decarboxylative condensation of pimeloyl-[acyl-carrier protein] and L-alanine to produce 8-amino-7-oxononanoate (AON), [acyl-carrier protein], and carbon dioxide. This Mycobacterium sp. (strain JLS) protein is 8-amino-7-oxononanoate synthase.